We begin with the raw amino-acid sequence, 750 residues long: Photosystem I P700 chlorophyll a apoprotein A1 (750 aa).

Transmembrane regions (helical) follow at residues 70 to 93 (IFSA…FHGA), 156 to 179 (LYCT…FHYH), 195 to 219 (LNHH…HVSL), 291 to 309 (IAHH…GHMY), 346 to 369 (WHAQ…HHMY), 385 to 411 (LSLF…IFMV), 433 to 455 (AIIS…LYIH), and 531 to 549 (FLVH…LILL). Residues Cys-573 and Cys-582 each coordinate [4Fe-4S] cluster. Transmembrane regions (helical) follow at residues 589-610 (HVFL…HFSW) and 664-686 (LSAY…MFLF). Residue His-675 participates in chlorophyll a' binding. Residues Met-683 and Tyr-691 each contribute to the chlorophyll a site. Trp-692 serves as a coordination point for phylloquinone. A helical membrane pass occupies residues 724-744 (AVGVTHYLLGGIATTWAFFLA).

The protein belongs to the PsaA/PsaB family. In terms of assembly, the PsaA/B heterodimer binds the P700 chlorophyll special pair and subsequent electron acceptors. PSI consists of a core antenna complex that captures photons, and an electron transfer chain that converts photonic excitation into a charge separation. The eukaryotic PSI reaction center is composed of at least 11 subunits. P700 is a chlorophyll a/chlorophyll a' dimer, A0 is one or more chlorophyll a, A1 is one or both phylloquinones and FX is a shared 4Fe-4S iron-sulfur center. is required as a cofactor.

It is found in the plastid. It localises to the chloroplast thylakoid membrane. It carries out the reaction reduced [plastocyanin] + hnu + oxidized [2Fe-2S]-[ferredoxin] = oxidized [plastocyanin] + reduced [2Fe-2S]-[ferredoxin]. PsaA and PsaB bind P700, the primary electron donor of photosystem I (PSI), as well as the electron acceptors A0, A1 and FX. PSI is a plastocyanin-ferredoxin oxidoreductase, converting photonic excitation into a charge separation, which transfers an electron from the donor P700 chlorophyll pair to the spectroscopically characterized acceptors A0, A1, FX, FA and FB in turn. Oxidized P700 is reduced on the lumenal side of the thylakoid membrane by plastocyanin. This is Photosystem I P700 chlorophyll a apoprotein A1 from Gossypium hirsutum (Upland cotton).